The following is a 434-amino-acid chain: Alpha-enolase (434 aa).

Ser40 contributes to the Mg(2+) binding site. Residues His158 and Glu167 each contribute to the substrate site. Glu210 acts as the Proton donor in catalysis. 3 residues coordinate Mg(2+): Asp245, Glu293, and Asp318. Glu293 and Asp318 together coordinate substrate. Lys343 acts as the Proton acceptor in catalysis. Residues 370 to 373 and Lys394 contribute to the substrate site; that span reads SHRS.

This sequence belongs to the enolase family. Homodimer. Mg(2+) is required as a cofactor.

Its subcellular location is the cytoplasm. It catalyses the reaction (2R)-2-phosphoglycerate = phosphoenolpyruvate + H2O. Its pathway is carbohydrate degradation; glycolysis; pyruvate from D-glyceraldehyde 3-phosphate: step 4/5. The protein is Alpha-enolase of Sceloporus undulatus (Eastern fence lizard).